The following is a 427-amino-acid chain: Glutamate-1-semialdehyde 2,1-aminomutase (427 aa).

Lys265 bears the N6-(pyridoxal phosphate)lysine mark.

This sequence belongs to the class-III pyridoxal-phosphate-dependent aminotransferase family. HemL subfamily. Homodimer. Pyridoxal 5'-phosphate is required as a cofactor.

It localises to the cytoplasm. The enzyme catalyses (S)-4-amino-5-oxopentanoate = 5-aminolevulinate. The protein operates within porphyrin-containing compound metabolism; protoporphyrin-IX biosynthesis; 5-aminolevulinate from L-glutamyl-tRNA(Glu): step 2/2. This Burkholderia orbicola (strain MC0-3) protein is Glutamate-1-semialdehyde 2,1-aminomutase.